The sequence spans 386 residues: Succinate--CoA ligase [ADP-forming] subunit beta (386 aa).

The region spanning 9–244 (KEILHKFNVP…YDEEVKEEIE (236 aa)) is the ATP-grasp domain. Residues lysine 46, 53–55 (GRG), glutamate 99, serine 102, and glutamate 107 each bind ATP. Mg(2+) contacts are provided by asparagine 199 and aspartate 213. Residues asparagine 264 and 321 to 323 (GIM) each bind substrate.

It belongs to the succinate/malate CoA ligase beta subunit family. As to quaternary structure, heterotetramer of two alpha and two beta subunits. Requires Mg(2+) as cofactor.

It catalyses the reaction succinate + ATP + CoA = succinyl-CoA + ADP + phosphate. It carries out the reaction GTP + succinate + CoA = succinyl-CoA + GDP + phosphate. It functions in the pathway carbohydrate metabolism; tricarboxylic acid cycle; succinate from succinyl-CoA (ligase route): step 1/1. Its function is as follows. Succinyl-CoA synthetase functions in the citric acid cycle (TCA), coupling the hydrolysis of succinyl-CoA to the synthesis of either ATP or GTP and thus represents the only step of substrate-level phosphorylation in the TCA. The beta subunit provides nucleotide specificity of the enzyme and binds the substrate succinate, while the binding sites for coenzyme A and phosphate are found in the alpha subunit. The protein is Succinate--CoA ligase [ADP-forming] subunit beta of Wolbachia pipientis subsp. Culex pipiens (strain wPip).